The sequence spans 611 residues: Dihydroxy-acid dehydratase (611 aa).

Residue Asp-81 coordinates Mg(2+). Cys-122 lines the [2Fe-2S] cluster pocket. Mg(2+) is bound by residues Asp-123 and Lys-124. Lys-124 carries the N6-carboxylysine modification. Cys-195 lines the [2Fe-2S] cluster pocket. Glu-491 is a Mg(2+) binding site. The active-site Proton acceptor is the Ser-517.

The protein belongs to the IlvD/Edd family. In terms of assembly, homodimer. The cofactor is [2Fe-2S] cluster. Mg(2+) serves as cofactor.

It catalyses the reaction (2R)-2,3-dihydroxy-3-methylbutanoate = 3-methyl-2-oxobutanoate + H2O. It carries out the reaction (2R,3R)-2,3-dihydroxy-3-methylpentanoate = (S)-3-methyl-2-oxopentanoate + H2O. The protein operates within amino-acid biosynthesis; L-isoleucine biosynthesis; L-isoleucine from 2-oxobutanoate: step 3/4. Its pathway is amino-acid biosynthesis; L-valine biosynthesis; L-valine from pyruvate: step 3/4. Functions in the biosynthesis of branched-chain amino acids. Catalyzes the dehydration of (2R,3R)-2,3-dihydroxy-3-methylpentanoate (2,3-dihydroxy-3-methylvalerate) into 2-oxo-3-methylpentanoate (2-oxo-3-methylvalerate) and of (2R)-2,3-dihydroxy-3-methylbutanoate (2,3-dihydroxyisovalerate) into 2-oxo-3-methylbutanoate (2-oxoisovalerate), the penultimate precursor to L-isoleucine and L-valine, respectively. This is Dihydroxy-acid dehydratase from Brucella anthropi (strain ATCC 49188 / DSM 6882 / CCUG 24695 / JCM 21032 / LMG 3331 / NBRC 15819 / NCTC 12168 / Alc 37) (Ochrobactrum anthropi).